A 226-amino-acid chain; its full sequence is MNENLFASFAAPSMMGLPIVVLIVMFPSILFPTPSRLINNRLISIQQWLIQLTSKQMLAIHNQKGRTWALMLMSLILFIGSTNLLGLLPHSFTPTTQLSMNLGMAIPLWAGTVITGFRYKTKASLAHFLPQGTPLPLIPMLVVIETISLFIQPMALAVRLTANITAGHLLIHLIGGATLALINISATTAFITFIILILLTILEFAVALIQAYVFTLLVSLYLHDNT.

The next 6 membrane-spanning stretches (helical) occupy residues 11–31 (APSMMGLPIVVLIVMFPSILF), 68–88 (WALMLMSLILFIGSTNLLGLL), 97–117 (QLSMNLGMAIPLWAGTVITGF), 138–158 (IPMLVVIETISLFIQPMALAV), 164–184 (ITAGHLLIHLIGGATLALINI), and 189–209 (AFITFIILILLTILEFAVALI).

This sequence belongs to the ATPase A chain family. In terms of assembly, component of the ATP synthase complex composed at least of ATP5F1A/subunit alpha, ATP5F1B/subunit beta, ATP5MC1/subunit c (homooctomer), MT-ATP6/subunit a, MT-ATP8/subunit 8, ATP5ME/subunit e, ATP5MF/subunit f, ATP5MG/subunit g, ATP5MK/subunit k, ATP5MJ/subunit j, ATP5F1C/subunit gamma, ATP5F1D/subunit delta, ATP5F1E/subunit epsilon, ATP5PF/subunit F6, ATP5PB/subunit b, ATP5PD/subunit d, ATP5PO/subunit OSCP. ATP synthase complex consists of a soluble F(1) head domain (subunits alpha(3) and beta(3)) - the catalytic core - and a membrane F(0) domain - the membrane proton channel (subunits c, a, 8, e, f, g, k and j). These two domains are linked by a central stalk (subunits gamma, delta, and epsilon) rotating inside the F1 region and a stationary peripheral stalk (subunits F6, b, d, and OSCP). Interacts with DNAJC30; interaction is direct.

It localises to the mitochondrion inner membrane. It carries out the reaction H(+)(in) = H(+)(out). Functionally, subunit a, of the mitochondrial membrane ATP synthase complex (F(1)F(0) ATP synthase or Complex V) that produces ATP from ADP in the presence of a proton gradient across the membrane which is generated by electron transport complexes of the respiratory chain. ATP synthase complex consist of a soluble F(1) head domain - the catalytic core - and a membrane F(1) domain - the membrane proton channel. These two domains are linked by a central stalk rotating inside the F(1) region and a stationary peripheral stalk. During catalysis, ATP synthesis in the catalytic domain of F(1) is coupled via a rotary mechanism of the central stalk subunits to proton translocation. With the subunit c (ATP5MC1), forms the proton-conducting channel in the F(0) domain, that contains two crucial half-channels (inlet and outlet) that facilitate proton movement from the mitochondrial intermembrane space (IMS) into the matrix. Protons are taken up via the inlet half-channel and released through the outlet half-channel, following a Grotthuss mechanism. The sequence is that of ATP synthase F(0) complex subunit a from Canis lupus familiaris (Dog).